The sequence spans 554 residues: CTP synthase (554 aa).

An amidoligase domain region spans residues 1–265 (MTPLIFVTGG…DEIVIDQFKL (265 aa)). A CTP-binding site is contributed by S13. S13 is a UTP binding site. ATP-binding positions include 14 to 19 (SLGKGI) and D71. D71 and E139 together coordinate Mg(2+). CTP-binding positions include 146–148 (DIE), 186–191 (KTKPTQ), and K222. UTP-binding positions include 186-191 (KTKPTQ) and K222. The Glutamine amidotransferase type-1 domain maps to 292 to 545 (TIAVVGKYVD…VKAARARKAG (254 aa)). G353 serves as a coordination point for L-glutamine. C380 serves as the catalytic Nucleophile; for glutamine hydrolysis. Residues 381-384 (YGMQ), E404, and R471 contribute to the L-glutamine site. Catalysis depends on residues H518 and E520.

Belongs to the CTP synthase family. Homotetramer.

The enzyme catalyses UTP + L-glutamine + ATP + H2O = CTP + L-glutamate + ADP + phosphate + 2 H(+). The catalysed reaction is L-glutamine + H2O = L-glutamate + NH4(+). It catalyses the reaction UTP + NH4(+) + ATP = CTP + ADP + phosphate + 2 H(+). The protein operates within pyrimidine metabolism; CTP biosynthesis via de novo pathway; CTP from UDP: step 2/2. Allosterically activated by GTP, when glutamine is the substrate; GTP has no effect on the reaction when ammonia is the substrate. The allosteric effector GTP functions by stabilizing the protein conformation that binds the tetrahedral intermediate(s) formed during glutamine hydrolysis. Inhibited by the product CTP, via allosteric rather than competitive inhibition. Functionally, catalyzes the ATP-dependent amination of UTP to CTP with either L-glutamine or ammonia as the source of nitrogen. Regulates intracellular CTP levels through interactions with the four ribonucleotide triphosphates. In Xylella fastidiosa (strain 9a5c), this protein is CTP synthase.